The sequence spans 298 residues: Protoheme IX farnesyltransferase (298 aa).

A run of 8 helical transmembrane segments spans residues 24–44 (VVSL…PAWP), 46–66 (WTTI…AAAF), 97–117 (LVFA…VVNP), 118–138 (LTMW…TVLL), 146–166 (IVIG…AATG), 172–192 (ALLL…ALAL), 231–251 (LLPV…VLLG), and 278–298 (IWYL…PIPV).

Belongs to the UbiA prenyltransferase family. Protoheme IX farnesyltransferase subfamily.

The protein localises to the cell inner membrane. It catalyses the reaction heme b + (2E,6E)-farnesyl diphosphate + H2O = Fe(II)-heme o + diphosphate. It functions in the pathway porphyrin-containing compound metabolism; heme O biosynthesis; heme O from protoheme: step 1/1. Functionally, converts heme B (protoheme IX) to heme O by substitution of the vinyl group on carbon 2 of heme B porphyrin ring with a hydroxyethyl farnesyl side group. The chain is Protoheme IX farnesyltransferase from Thiobacillus denitrificans (strain ATCC 25259 / T1).